A 36-amino-acid chain; its full sequence is Photosystem I reaction center subunit VIII (36 aa).

The chain crosses the membrane as a helical span at residues 9-29 (ILVPLVGLIFPAFSMALFFLY).

The protein belongs to the PsaI family.

It is found in the plastid. The protein resides in the chloroplast thylakoid membrane. May help in the organization of the PsaL subunit. The protein is Photosystem I reaction center subunit VIII of Thalassiosira pseudonana (Marine diatom).